The primary structure comprises 203 residues: ATP-dependent Clp protease proteolytic subunit 1 (203 aa).

Ser103 (nucleophile) is an active-site residue. Residue His128 is part of the active site.

This sequence belongs to the peptidase S14 family. In terms of assembly, fourteen ClpP subunits assemble into 2 heptameric rings which stack back to back to give a disk-like structure with a central cavity, resembling the structure of eukaryotic proteasomes.

It is found in the cytoplasm. It catalyses the reaction Hydrolysis of proteins to small peptides in the presence of ATP and magnesium. alpha-casein is the usual test substrate. In the absence of ATP, only oligopeptides shorter than five residues are hydrolyzed (such as succinyl-Leu-Tyr-|-NHMec, and Leu-Tyr-Leu-|-Tyr-Trp, in which cleavage of the -Tyr-|-Leu- and -Tyr-|-Trp bonds also occurs).. Its function is as follows. Cleaves peptides in various proteins in a process that requires ATP hydrolysis. Has a chymotrypsin-like activity. Plays a major role in the degradation of misfolded proteins. The sequence is that of ATP-dependent Clp protease proteolytic subunit 1 from Treponema pallidum (strain Nichols).